A 279-amino-acid polypeptide reads, in one-letter code: Elongation factor Ts (279 aa).

Residues 80–83 (TDFV) are involved in Mg(2+) ion dislocation from EF-Tu.

The protein belongs to the EF-Ts family.

The protein localises to the cytoplasm. Associates with the EF-Tu.GDP complex and induces the exchange of GDP to GTP. It remains bound to the aminoacyl-tRNA.EF-Tu.GTP complex up to the GTP hydrolysis stage on the ribosome. This chain is Elongation factor Ts, found in Borreliella burgdorferi (strain ZS7) (Borrelia burgdorferi).